A 251-amino-acid polypeptide reads, in one-letter code: Probable metal-binding protein YrpE (251 aa).

The first 30 residues, 1–30 (MNILFSKRLGILTIGSLLVLAGCQTSGSSA), serve as a signal peptide directing secretion. Residues 25–41 (TSGSSAGESNQTTSSSA) show a composition bias toward polar residues. The interval 25–72 (TSGSSAGESNQTTSSSAVEEDSSKTQEQTSDSHTHEHSHDHSHAHDEE) is disordered. The segment covering 54–72 (SDSHTHEHSHDHSHAHDEE) has biased composition (basic and acidic residues). Positions 203, 212, 214, 247, and 251 each coordinate Zn(2+).

This sequence belongs to the calycin superfamily. ZinT family.

This is Probable metal-binding protein YrpE (yrpE) from Bacillus subtilis (strain 168).